We begin with the raw amino-acid sequence, 300 residues long: 7-methylguanosine phosphate-specific 5'-nucleotidase (300 aa).

The active-site Nucleophile is the Asp-41. 2 residues coordinate Mg(2+): Asp-41 and Asp-43. Asp-43 acts as the Proton donor in catalysis. Position 88 (Glu-88) interacts with CMP. Glu-88 serves as a coordination point for N(7)-methyl-GMP. Substrate-binding positions include 156 to 157 (SA) and Lys-205. Residue Asp-230 participates in Mg(2+) binding. Lys-256 is modified (N6-acetyllysine).

Belongs to the pyrimidine 5'-nucleotidase family. Monomer.

The protein localises to the cytoplasm. The catalysed reaction is N(7)-methyl-GMP + H2O = N(7)-methylguanosine + phosphate. It carries out the reaction CMP + H2O = cytidine + phosphate. The enzyme catalyses a ribonucleoside 5'-phosphate + H2O = a ribonucleoside + phosphate. Functionally, specifically hydrolyzes 7-methylguanosine monophosphate (m(7)GMP) to 7-methylguanosine and inorganic phosphate. The specific activity for m(7)GMP may protect cells against undesired salvage of m(7)GMP and its incorporation into nucleic acids. Also has weak activity for CMP. UMP and purine nucleotides are poor substrates. In Homo sapiens (Human), this protein is 7-methylguanosine phosphate-specific 5'-nucleotidase (NT5C3B).